The sequence spans 477 residues: UDP-N-acetylmuramate--L-alanine ligase (477 aa).

Position 122–128 (122–128 (GTHGKTT)) interacts with ATP.

It belongs to the MurCDEF family.

The protein resides in the cytoplasm. It carries out the reaction UDP-N-acetyl-alpha-D-muramate + L-alanine + ATP = UDP-N-acetyl-alpha-D-muramoyl-L-alanine + ADP + phosphate + H(+). The protein operates within cell wall biogenesis; peptidoglycan biosynthesis. In terms of biological role, cell wall formation. This Xylella fastidiosa (strain M12) protein is UDP-N-acetylmuramate--L-alanine ligase.